The sequence spans 165 residues: Lipoprotein signal peptidase (165 aa).

The next 3 membrane-spanning stretches (helical) occupy residues 9–29 (FLAI…VLLY), 69–89 (KYFL…FLFL), and 98–118 (IRFS…DIVF). Catalysis depends on residues D124 and D142. The chain crosses the membrane as a helical span at residues 133–153 (WFFPTFNFADIFISLGTLIFI).

Belongs to the peptidase A8 family.

Its subcellular location is the cell inner membrane. It catalyses the reaction Release of signal peptides from bacterial membrane prolipoproteins. Hydrolyzes -Xaa-Yaa-Zaa-|-(S,diacylglyceryl)Cys-, in which Xaa is hydrophobic (preferably Leu), and Yaa (Ala or Ser) and Zaa (Gly or Ala) have small, neutral side chains.. It functions in the pathway protein modification; lipoprotein biosynthesis (signal peptide cleavage). Its function is as follows. This protein specifically catalyzes the removal of signal peptides from prolipoproteins. In Chlamydia abortus (strain DSM 27085 / S26/3) (Chlamydophila abortus), this protein is Lipoprotein signal peptidase.